A 500-amino-acid chain; its full sequence is Sulfate adenylyltransferase (500 aa).

The segment at 1 to 165 (MLSPHGGILQ…LEAIQLPAHY (165 aa)) is N-terminal. The segment at 166–390 (DYLNLRKSPA…LRQYNPPRYR (225 aa)) is catalytic. Residue glutamine 193 participates in sulfate binding. Residues 193–196 (QTRN) and 287–290 (GRDH) contribute to the ATP site. Active-site residues include threonine 194, arginine 195, and asparagine 196. Arginine 195 provides a ligand contact to sulfate. Alanine 291 contributes to the sulfate binding site. Isoleucine 329 contributes to the ATP binding site. A required for oligomerization; adenylyl-sulfate kinase-like region spans residues 391–500 (QGFVIVVNHE…FLEDNKFFQF (110 aa)).

It belongs to the sulfate adenylyltransferase family. In terms of assembly, homohexamer. Dimer of trimers.

It localises to the cytoplasm. It carries out the reaction sulfate + ATP + H(+) = adenosine 5'-phosphosulfate + diphosphate. It participates in sulfur metabolism; hydrogen sulfide biosynthesis; sulfite from sulfate: step 1/3. Functionally, catalyzes the first intracellular reaction of sulfate assimilation, forming adenosine-5'-phosphosulfate (APS) from inorganic sulfate and ATP. Plays an important role in sulfate activation as a component of the biosynthesis pathway of sulfur-containing amino acids. This Eremothecium gossypii (strain ATCC 10895 / CBS 109.51 / FGSC 9923 / NRRL Y-1056) (Yeast) protein is Sulfate adenylyltransferase.